The sequence spans 1028 residues: MMLSWKQLILLSFIGCLAGELLLQGPVFVKEPSNSIFPVGSEDKKITLNCEARGNPSPHYRWQLNGSDIDTSLDHRYKLNGGNLIVINPNRNWDTGSYQCFATNSLGTIVSREAKLQFAYLENFKSRMRSRVSVREGQGVVLLCGPPPHSGELSYAWVFNEYPSFVEEDSRRFVSQETGHLYIAKVEPSDVGNYTCVVTSTVTNARVLGSPTPLVLRSDGVMGEYEPKIELQFPETLPAAKGSTVKLECFALGNPVPQINWRRSDGMPFPTKIKLRKFNGVLEIPNFQQEDTGSYECIAENSRGKNVARGRLTYYAKPYWVQLLKDVETAVEDSLYWECRASGKPKPSYRWLKNGDALVLEERIQIENGALTIANLNVSDSGMFQCIAENKHGLIYSSAELKVLASAPDFSRNPMKKMIQVQVGSLVILDCKPSASPRALSFWKKGDTVVREQARISLLNDGGLKIMNVTKADAGIYTCIAENQFGKANGTTQLVVTEPTRIILAPSNMDVAVGESIILPCQVQHDPLLDIMFAWYFNGTLTDFKKDGSHFEKVGGSSSGDLMIRNIQLKHSGKYVCMVQTGVDSVSSAAELIVRGSPGPPENVKVDEITDTTAQLSWTEGTDSHSPVISYAVQARTPFSVGWQNVRTVPEAIDGKTRTATVVELNPWVEYEFRVVASNKIGGGEPSLPSEKVRTEEAAPEVAPSEVSGGGGSRSELVITWDPVPEELQNGGGFGYVVAFRPLGVTTWIQTVVTSPDNPRYVFRNESIVPFSPYEVKVGVYNNKGEGPFSPVTTVFSAEEEPTVAPSHISAHSLSSSEIEVSWNTIPWKSSNGRLLGYEVRYWNNGGEEESSSKVKVAGNQTSAVLRGLKSNLAYYTAVRAYNTAGAGPFSATVNATTKKTPPSQPPGNVVWNATDTKVLLNWEQVKALENESEVTGYKVFYRTSSQNNVQVLNTNKTSAELLLPIKEDYIIEVKATTDGGDGTSSEQIRIPRITSMDARGSTSAISDIHPVSGYISVLLFFIVNALW.

The first 19 residues, 1 to 19, serve as a signal peptide directing secretion; sequence MMLSWKQLILLSFIGCLAG. Ig-like C2-type domains follow at residues 26–117, 122–208, 227–313, 318–402, 408–497, and 499–593; these read PVFV…AKLQ, ENFK…ARVL, PKIE…GRLT, PYWV…AELK, PDFS…LVVT, and PTRI…AELI. Disulfide bonds link Cys-50–Cys-100, Cys-144–Cys-196, Cys-249–Cys-297, Cys-339–Cys-386, and Cys-431–Cys-479. Residues Asn-65 and Asn-193 are each glycosylated (N-linked (GlcNAc...) asparagine). N-linked (GlcNAc...) asparagine glycans are attached at residues Asn-377, Asn-468, Asn-489, and Asn-538. A disulfide bridge connects residues Cys-521 and Cys-577. Fibronectin type-III domains follow at residues 600–698, 703–800, 805–901, and 902–998; these read PPEN…TEEA, APSE…SAEE, APSH…TKKT, and PPSQ…TSMD. A disordered region spans residues 684–714; sequence GEPSLPSEKVRTEEAAPEVAPSEVSGGGGSR. Asn-765, Asn-860, Asn-895, Asn-913, Asn-931, and Asn-956 each carry an N-linked (GlcNAc...) asparagine glycan. Residue Ser-1002 is the site of GPI-anchor amidated serine attachment. The propeptide at 1003-1028 is removed in mature form; that stretch reads TSAISDIHPVSGYISVLLFFIVNALW.

Belongs to the immunoglobulin superfamily. Contactin family. In terms of assembly, interacts with PTPRG. In terms of tissue distribution, specifically expressed in brain. Not expressed in peripheral tissues such as heart, lung, liver, spleen, kidney and skeletal muscle. In brain, it is restricted to subsets of neurons such as Purkinje cells of the cerebellum, granule cells of the dentate gyrus, and neurons in the superficial layers of the cerebral cortex.

The protein resides in the cell membrane. Contactins mediate cell surface interactions during nervous system development. Has some neurite outgrowth-promoting activity. In Rattus norvegicus (Rat), this protein is Contactin-3 (Cntn3).